The following is a 737-amino-acid chain: Catalase-peroxidase (737 aa).

The tract at residues 1 to 29 (MTDSPDATTGGCPVAHGDRLPHPTQGGAN) is disordered. Residues 101-227 (WHSAGTYRVS…LGATHMGLIY (127 aa)) constitute a cross-link (tryptophyl-tyrosyl-methioninium (Trp-Tyr) (with M-253)). Residue histidine 102 is the Proton acceptor of the active site. Positions 227–253 (YVNPEGPEGKPDPVAAARDIRETFGRM) form a cross-link, tryptophyl-tyrosyl-methioninium (Tyr-Met) (with W-101). Residue histidine 268 participates in heme b binding.

The protein belongs to the peroxidase family. Peroxidase/catalase subfamily. As to quaternary structure, homodimer or homotetramer. Heme b serves as cofactor. In terms of processing, formation of the three residue Trp-Tyr-Met cross-link is important for the catalase, but not the peroxidase activity of the enzyme.

It carries out the reaction H2O2 + AH2 = A + 2 H2O. It catalyses the reaction 2 H2O2 = O2 + 2 H2O. Functionally, bifunctional enzyme with both catalase and broad-spectrum peroxidase activity. In Saccharopolyspora erythraea (strain ATCC 11635 / DSM 40517 / JCM 4748 / NBRC 13426 / NCIMB 8594 / NRRL 2338), this protein is Catalase-peroxidase.